The following is a 367-amino-acid chain: MHTMHIPSGDVLIPKPKLITEETDPLHIIKTRQKTHGRPVTIAGPMVRYSKLPFRQLCREYNVDIVYSPMILAREYVRNEHARISDLSTNNEDTPLIVQVGVNNVADLLKFVEMVAPYCDGIGINCGCPIKEQIREGIGCALIYNSDLLCSMVHAVKDKYGDKLRIETKIRIHEALDETVELCRKLCDAGVDWITIHGRTRRTRSSQPANLDAIKYIIENISDKNVPVIANGDCFKLSDLERITKYTGAHGVMAVRGLLSNPALFAGYTTCPWGCIEKFCYWALEFGGLPFQLAQHHLYCMLENMELKKSLLKKMMNLKNYISLIDWFNKTFEFKRYGEDGFGMGVEIPYKANSCVQRSASVVERQE.

Residues 45 to 47 and Q99 each bind FMN; that span reads PMV. The Proton donor role is filled by C128. Residues K169, H197, 231–233, and 255–256 each bind FMN; these read NGD and VR.

Belongs to the Dus family. Dus4 subfamily. The cofactor is FMN.

The enzyme catalyses 5,6-dihydrouridine(20a) in tRNA + NADP(+) = uridine(20a) in tRNA + NADPH + H(+). The catalysed reaction is 5,6-dihydrouridine(20a) in tRNA + NAD(+) = uridine(20a) in tRNA + NADH + H(+). It catalyses the reaction 5,6-dihydrouridine(20b) in tRNA + NAD(+) = uridine(20b) in tRNA + NADH + H(+). It carries out the reaction 5,6-dihydrouridine(20b) in tRNA + NADP(+) = uridine(20b) in tRNA + NADPH + H(+). The enzyme catalyses a 5,6-dihydrouridine in mRNA + NAD(+) = a uridine in mRNA + NADH + H(+). The catalysed reaction is a 5,6-dihydrouridine in mRNA + NADP(+) = a uridine in mRNA + NADPH + H(+). Catalyzes the synthesis of dihydrouridine, a modified base found in the D-loop of most tRNAs. Specifically modifies U20a and U20b in cytoplasmic tRNAs. Also able to mediate dihydrouridylation of some mRNAs, thereby affecting their translation. The chain is tRNA-dihydrouridine(20a/20b) synthase [NAD(P)+] from Saccharomyces cerevisiae (strain ATCC 204508 / S288c) (Baker's yeast).